The following is a 307-amino-acid chain: GTPase Era (307 aa).

The region spanning Arg17–Glu186 is the Era-type G domain. A G1 region spans residues Gly25–Ser32. Gly25–Ser32 contributes to the GTP binding site. The segment at Gln51–Asn55 is G2. Residues Asp72–Gly75 are G3. GTP contacts are provided by residues Asp72 to Phe76 and Asn133 to Asp136. Residues Asn133–Asp136 form a G4 region. Residues Val165–Ala167 are G5. One can recognise a KH type-2 domain in the interval Leu217–Ser293.

This sequence belongs to the TRAFAC class TrmE-Era-EngA-EngB-Septin-like GTPase superfamily. Era GTPase family. Monomer.

It localises to the cytoplasm. It is found in the cell inner membrane. In terms of biological role, an essential GTPase that binds both GDP and GTP, with rapid nucleotide exchange. Plays a role in 16S rRNA processing and 30S ribosomal subunit biogenesis and possibly also in cell cycle regulation and energy metabolism. This Neisseria meningitidis serogroup A / serotype 4A (strain DSM 15465 / Z2491) protein is GTPase Era.